We begin with the raw amino-acid sequence, 210 residues long: Protein-L-isoaspartate O-methyltransferase (210 aa).

S59 is an active-site residue.

This sequence belongs to the methyltransferase superfamily. L-isoaspartyl/D-aspartyl protein methyltransferase family.

The protein resides in the cytoplasm. It catalyses the reaction [protein]-L-isoaspartate + S-adenosyl-L-methionine = [protein]-L-isoaspartate alpha-methyl ester + S-adenosyl-L-homocysteine. In terms of biological role, catalyzes the methyl esterification of L-isoaspartyl residues in peptides and proteins that result from spontaneous decomposition of normal L-aspartyl and L-asparaginyl residues. It plays a role in the repair and/or degradation of damaged proteins. The chain is Protein-L-isoaspartate O-methyltransferase from Nitratidesulfovibrio vulgaris (strain ATCC 29579 / DSM 644 / CCUG 34227 / NCIMB 8303 / VKM B-1760 / Hildenborough) (Desulfovibrio vulgaris).